We begin with the raw amino-acid sequence, 341 residues long: tRNA N6-adenosine threonylcarbamoyltransferase (341 aa).

Positions 117 and 121 each coordinate Fe cation. Substrate-binding positions include 140–144 (VVSGG), Asp-173, Gly-186, and Asn-278. Residue Asp-306 coordinates Fe cation.

The protein belongs to the KAE1 / TsaD family. Fe(2+) is required as a cofactor.

The protein resides in the cytoplasm. The catalysed reaction is L-threonylcarbamoyladenylate + adenosine(37) in tRNA = N(6)-L-threonylcarbamoyladenosine(37) in tRNA + AMP + H(+). Required for the formation of a threonylcarbamoyl group on adenosine at position 37 (t(6)A37) in tRNAs that read codons beginning with adenine. Is involved in the transfer of the threonylcarbamoyl moiety of threonylcarbamoyl-AMP (TC-AMP) to the N6 group of A37, together with TsaE and TsaB. TsaD likely plays a direct catalytic role in this reaction. The polypeptide is tRNA N6-adenosine threonylcarbamoyltransferase (Symbiobacterium thermophilum (strain DSM 24528 / JCM 14929 / IAM 14863 / T)).